A 263-amino-acid chain; its full sequence is Cysteine-rich repeat secretory protein 55 (263 aa).

The N-terminal stretch at 1 to 20 (MKTLVVKCFLLLALVCSCRA) is a signal peptide. 2 Gnk2-homologous domains span residues 22-126 (DSIW…QENF) and 132-240 (TGAG…FYPF).

The protein belongs to the cysteine-rich repeat secretory protein family.

The protein resides in the secreted. In Arabidopsis thaliana (Mouse-ear cress), this protein is Cysteine-rich repeat secretory protein 55 (CRRSP55).